Consider the following 493-residue polypeptide: Accumulates dyads protein 4 (493 aa).

Interacts with CNM67, SPO21/MPC70 and NUD1.

Its subcellular location is the cytoplasm. It is found in the cytoskeleton. The protein localises to the microtubule organizing center. It localises to the spindle pole body. Involved in the pathway that organizes the shaping and sizing of the prospore membrane (PSM) during sporulation. May be required to stabilize the outer plaque of the spindle pole body (SPB). This is Accumulates dyads protein 4 (ADY4) from Saccharomyces cerevisiae (strain ATCC 204508 / S288c) (Baker's yeast).